The following is a 291-amino-acid chain: MKTGRIVKLISGVYQVDVEGERFDTKPRGLFRKKKFSPVVGDIVDFEVQNTKEGYIHHVHDRNNELKRPPVSNIDELVIVMSAVEPEFSTQLLDRYLVIAHSYHLKPRILITKHDLASEQEILKIKDTIKIYQKIGYATQFIGKDSNYTATVDEWSDGLIVLSGQSGVGKSTFLNSYQPQLKLETNDISKSLNRGKHTTRHVELYDRKGGYIADTPGFSALDFNHIEKEQLKDFFIDIHEAGEQCKFRNCNHIKEPQCHVKALVEKGEIPQFRYDHYQQLYNEISNRKVRY.

The CP-type G domain maps to 63 to 221 (NNELKRPPVS…IADTPGFSAL (159 aa)). GTP-binding positions include 112–115 (TKHD) and 164–172 (GQSGVGKST). The Zn(2+) site is built by Cys-245, Cys-250, His-252, and Cys-258.

The protein belongs to the TRAFAC class YlqF/YawG GTPase family. RsgA subfamily. As to quaternary structure, monomer. Associates with 30S ribosomal subunit, binds 16S rRNA. Requires Zn(2+) as cofactor.

The protein localises to the cytoplasm. Its function is as follows. One of several proteins that assist in the late maturation steps of the functional core of the 30S ribosomal subunit. Helps release RbfA from mature subunits. May play a role in the assembly of ribosomal proteins into the subunit. Circularly permuted GTPase that catalyzes slow GTP hydrolysis, GTPase activity is stimulated by the 30S ribosomal subunit. The polypeptide is Small ribosomal subunit biogenesis GTPase RsgA (Staphylococcus epidermidis (strain ATCC 12228 / FDA PCI 1200)).